The following is a 1909-amino-acid chain: DENN domain-containing protein 4C (1909 aa).

Residues 40–199 (KAPITDIAII…SVFLCYKKSV (160 aa)) form the MABP domain. A uDENN domain is found at 191 to 364 (VFLCYKKSVP…NIPFPSPQRP (174 aa)). The region spanning 385–521 (PLPLSGANFS…PCKNLLSTLK (137 aa)) is the cDENN domain. A dDENN domain is found at 523 to 641 (LYPQLSSVHQ…CSFVSDKDTG (119 aa)). 3 positions are modified to phosphoserine: serine 703, serine 737, and serine 741. Residues 821–855 (VCYRVVMQLCGLWGHPVLAVRVLFEMKTARIKPNA) form a PPR repeat. Residues glutamate 953, serine 965, serine 968, and serine 973 each carry the phosphoserine modification. Threonine 975 bears the Phosphothreonine mark. A phosphoserine mark is found at serine 989, serine 996, serine 1003, serine 1046, serine 1061, serine 1099, serine 1126, serine 1184, serine 1225, serine 1244, serine 1252, and serine 1278. Disordered regions lie at residues 1243–1263 (KSPL…NRES) and 1277–1338 (SSLP…HGSL). Over residues 1296 to 1316 (SSPAVSRSKTFTGRFKQQTPS) the composition is skewed to polar residues. A phosphoserine mark is found at serine 1325, serine 1337, and serine 1346. Positions 1419–1474 (SGLVPSELTQSNTSLGSSSSSGDVGKLHYPTGEVPFPRGMKGQDFEKSDHGSSQNT) are disordered. Positions 1426 to 1440 (LTQSNTSLGSSSSSG) are enriched in low complexity. Positions 1459-1468 (KGQDFEKSDH) are enriched in basic and acidic residues. A phosphoserine mark is found at serine 1623, serine 1627, serine 1629, serine 1640, and serine 1799.

In terms of processing, phosphorylated in response to insulin.

The protein localises to the cytoplasmic vesicle membrane. It is found in the cell membrane. The protein resides in the cytoplasm. It localises to the cytosol. Functionally, guanine nucleotide exchange factor (GEF) activating RAB10. Promotes the exchange of GDP to GTP, converting inactive GDP-bound RAB10 into its active GTP-bound form. Thereby, stimulates SLC2A4/GLUT4 glucose transporter-enriched vesicles delivery to the plasma membrane in response to insulin. The chain is DENN domain-containing protein 4C (DENND4C) from Homo sapiens (Human).